Here is a 1030-residue protein sequence, read N- to C-terminus: E3 ubiquitin-protein ligase mib1 (1030 aa).

The MIB/HERC2 1 domain occupies 6–74 (NNRVMMEGVG…AYDVRILDSA (69 aa)). The ZZ-type zinc-finger motif lies at 80–132 (HDGTMCDTCRQQPIIGIRWKCAECTNYDLCTTCYHGDKHHLRHRFYRITTPGS). Zn(2+) is bound by residues Cys-85, Cys-88, Cys-100, Cys-103, Cys-109, Cys-112, His-118, and His-122. The 79-residue stretch at 143–221 (SKKITARGIF…MSDLKCVQDA (79 aa)) folds into the MIB/HERC2 2 domain. ANK repeat units follow at residues 430-460 (DINE…DVNG), 463-492 (AGHT…DLEA), 496-525 (DGDR…DLNA), 529-558 (RRQT…HPSL), 562-591 (EGDT…DVTI), 595-627 (NGFN…IVDE), 631-661 (DGYT…NLDV), 665-694 (NQQT…KLDV), and 698-727 (DGDT…VSKV). RING-type zinc fingers lie at residues 817 to 852 (CMVC…LICK) and 864 to 899 (CVVC…VQCR). Residues 957–986 (ALQRDKDNTNVNADVQKLQQQLQDIKEQTM) adopt a coiled-coil conformation. An RING-type 3 zinc finger spans residues 987–1020 (CPVCLDRLKNMIFMCGHGTCQLCGDRMSECPICR).

In terms of assembly, interacts with deltaA (dla) and deltaD (dld).

Its subcellular location is the cytoplasm. The protein resides in the cytoskeleton. The protein localises to the microtubule organizing center. It is found in the centrosome. It localises to the centriolar satellite. Its subcellular location is the cell membrane. The catalysed reaction is S-ubiquitinyl-[E2 ubiquitin-conjugating enzyme]-L-cysteine + [acceptor protein]-L-lysine = [E2 ubiquitin-conjugating enzyme]-L-cysteine + N(6)-ubiquitinyl-[acceptor protein]-L-lysine.. It participates in protein modification; protein ubiquitination. Functionally, E3 ubiquitin-protein ligase that mediates ubiquitination of Delta receptors, which act as ligands of Notch proteins. Positively regulates the Delta-mediated Notch signaling by ubiquitinating the intracellular domain of Delta, leading to endocytosis of Delta receptors. It thereby participates in many processes regulated by the Notch signaling pathway, such as midline cell fate specification prior to germ layer formation, patterning of sensory cell differentiation in the ear, neurogenesis of the hindbrain and commitment to a secretory fate in the intestine. Essential for early embryonic development. In Danio rerio (Zebrafish), this protein is E3 ubiquitin-protein ligase mib1 (mib1).